Consider the following 378-residue polypeptide: Actin-related protein 2/3 complex subunit 1A (378 aa).

7 WD repeats span residues arginine 8–arginine 47, lysine 53–threonine 92, arginine 97–lysine 138, arginine 143–lysine 182, leucine 203–glutamine 242, isoleucine 257–serine 295, and valine 331–glycine 375.

This sequence belongs to the WD repeat ARPC1 family. Component of the Arp2/3 complex composed of ARP2, ARP3, ARPC1/p41-ARC, ARPC2/p34-ARC, ARPC3/p21-ARC, ARPC4/p20-ARC and ARPC5/p16-ARC. In terms of tissue distribution, expressed at low levels in all tissues with a relatively highest expression in inflorescences.

Its subcellular location is the cytoplasm. It localises to the cytoskeleton. Its function is as follows. Functions as a component of the Arp2/3 complex which is involved in regulation of actin polymerization and together with an activating nucleation-promoting factor (NPF) mediates the formation of branched actin networks. Arp2/3 complex plays a critical role in the control of cell morphogenesis via the modulation of cell polarity development. This is Actin-related protein 2/3 complex subunit 1A (ARPC1A) from Arabidopsis thaliana (Mouse-ear cress).